A 99-amino-acid polypeptide reads, in one-letter code: Large ribosomal subunit protein bL21 (99 aa).

Belongs to the bacterial ribosomal protein bL21 family. In terms of assembly, part of the 50S ribosomal subunit. Contacts protein L20.

Functionally, this protein binds to 23S rRNA in the presence of protein L20. The sequence is that of Large ribosomal subunit protein bL21 from Mycoplasmopsis pulmonis (strain UAB CTIP) (Mycoplasma pulmonis).